Consider the following 160-residue polypeptide: MSEPQQQQVNLGSLSLEQLQMVREQVEAEIQQLSESIQQLKHASNKYIEAKEAMGGLKGTDGKDMLVPLTSSIYLPGKINSNEKVLVDIGTGYYVEMGIEQGQNFSNRKVQLITEQVNKVQTAINMKRQNLESIVQVAQSKISLYKQQQAQQSQQQVQQK.

The protein belongs to the prefoldin subunit alpha family. As to quaternary structure, heterohexamer of two PFD-alpha type and four PFD-beta type subunits.

Its function is as follows. Binds specifically to cytosolic chaperonin (c-CPN) and transfers target proteins to it. Binds to nascent polypeptide chain and promotes folding in an environment in which there are many competing pathways for nonnative proteins. The sequence is that of Probable prefoldin subunit 5 (pfdn5) from Dictyostelium discoideum (Social amoeba).